The following is a 406-amino-acid chain: Sorting nexin-6 (406 aa).

Met1 carries the N-acetylmethionine modification. N-acetylmethionine; in Sorting nexin-6, N-terminally processed is present on Met2. The segment at 2–179 is interaction with PIM1; that stretch reads MEGLDDGPDF…NQDLSVRGKN (178 aa). The PX domain maps to 26 to 173; sequence LQSDAALQVD…HVFLEYNQDL (148 aa). A 1,2-diacyl-sn-glycero-3-phospho-(1D-myo-inositol-4,5-bisphosphate)-binding positions include 41-47, 100-106, and 114-117; these read SERDKVK, FDASREK, and EGSM. A phosphoserine mark is found at Ser116 and Ser194. A membrane-binding amphipathic helix region spans residues 182-199; that stretch reads EKLEDFFKNMVKSADGVI. Residues 203 to 406 form the BAR domain; the sequence is VKDVDDFFEH…NCLAVLNGDT (204 aa).

Belongs to the sorting nexin family. As to quaternary structure, forms heterodimers with BAR domain-containing sorting nexins SNX1 and SNX2. The heterodimers are proposed to self-assemble into helical arrays on the membrane to stabilize and expand local membrane curvature underlying endosomal tubule formation. Thought to be a component of the originally described retromer complex (also called SNX-BAR retromer) which is a pentamer containing the heterotrimeric retromer cargo-selective complex (CSC), also described as vacuolar protein sorting subcomplex (VPS), and a heterodimeric membrane-deforming subcomplex formed between SNX1 or SNX2 and SNX5 or SNX6 (also called SNX-BAR subcomplex); the respective CSC and SNX-BAR subcomplexes associate with low affinity. Interacts with SNX1, SNX2, VPS26A, VPS29, VPS35, CDKN1B, TGFB receptors, BACE1, BRMS1, PIP5K1C isoform 3. Interacts with DCTN1; the association with DCTN1 is involved in movement of retromer-c ontaining vesicles toward the TGN. Interacts with CDKN1B and GIT1. Interacts with PIM1; translocating SNX6 to the nucleus. In terms of processing, in vitro phosphorylated by PIM1; not affecting PIM1-dependent nuclear translocation.

It localises to the early endosome. It is found in the early endosome membrane. Its subcellular location is the cytoplasmic vesicle. The protein localises to the cytoplasm. The protein resides in the nucleus. Its function is as follows. Involved in several stages of intracellular trafficking. Interacts with membranes phosphatidylinositol 3,4-bisphosphate and/or phosphatidylinositol 4,5-bisphosphate. Acts in part as component of the retromer membrane-deforming SNX-BAR subcomplex. The SNX-BAR retromer mediates retrograde transport of cargo proteins from endosomes to the trans-Golgi network (TGN) and is involved in endosome-to-plasma membrane transport for cargo protein recycling. The SNX-BAR subcomplex functions to deform the donor membrane into a tubular profile called endosome-to-TGN transport carrier (ETC). Does not have in vitro vesicle-to-membrane remodeling activity. Involved in retrograde endosome-to-TGN transport of lysosomal enzyme receptor IGF2R. May function as link between transport vesicles and dynactin. Negatively regulates retrograde transport of BACE1 from the cell surface to the trans-Golgi network. Involved in E-cadherin sorting and degradation; inhibits PIP5K1C isoform 3-mediated E-cadherin degradation. In association with GIT1 involved in EGFR degradation. Promotes lysosomal degradation of CDKN1B. May contribute to transcription regulation. The chain is Sorting nexin-6 (SNX6) from Homo sapiens (Human).